Here is a 326-residue protein sequence, read N- to C-terminus: tRNA-modifying protein YgfZ (326 aa).

Positions 27 and 189 each coordinate folate.

Belongs to the tRNA-modifying YgfZ family.

It is found in the cytoplasm. In terms of biological role, folate-binding protein involved in regulating the level of ATP-DnaA and in the modification of some tRNAs. It is probably a key factor in regulatory networks that act via tRNA modification, such as initiation of chromosomal replication. The chain is tRNA-modifying protein YgfZ from Escherichia coli O127:H6 (strain E2348/69 / EPEC).